The primary structure comprises 105 residues: Large ribosomal subunit protein uL24 (105 aa).

The protein belongs to the universal ribosomal protein uL24 family. In terms of assembly, part of the 50S ribosomal subunit.

Its function is as follows. One of two assembly initiator proteins, it binds directly to the 5'-end of the 23S rRNA, where it nucleates assembly of the 50S subunit. One of the proteins that surrounds the polypeptide exit tunnel on the outside of the subunit. The polypeptide is Large ribosomal subunit protein uL24 (Rhizorhabdus wittichii (strain DSM 6014 / CCUG 31198 / JCM 15750 / NBRC 105917 / EY 4224 / RW1) (Sphingomonas wittichii)).